The sequence spans 207 residues: Large ribosomal subunit protein eL13 (207 aa).

This sequence belongs to the eukaryotic ribosomal protein eL13 family. Component of the 60S large ribosomal subunit (LSU).

It is found in the cytoplasm. Functionally, component of the ribosome, a large ribonucleoprotein complex responsible for the synthesis of proteins in the cell. The small ribosomal subunit (SSU) binds messenger RNAs (mRNAs) and translates the encoded message by selecting cognate aminoacyl-transfer RNA (tRNA) molecules. The large subunit (LSU) contains the ribosomal catalytic site termed the peptidyl transferase center (PTC), which catalyzes the formation of peptide bonds, thereby polymerizing the amino acids delivered by tRNAs into a polypeptide chain. The nascent polypeptides leave the ribosome through a tunnel in the LSU and interact with protein factors that function in enzymatic processing, targeting, and the membrane insertion of nascent chains at the exit of the ribosomal tunnel. As part of the LSU, it is probably required for its formation and the maturation of rRNAs. In Caenorhabditis elegans, this protein is Large ribosomal subunit protein eL13 (rpl-13).